The sequence spans 429 residues: Phosphoribosylamine--glycine ligase (429 aa).

Positions 109-316 (KDFLARHHIP…LVELCLAACD (208 aa)) constitute an ATP-grasp domain. Position 135-196 (135-196 (LREKGAPIVV…EEFLDGEEAS (62 aa))) interacts with ATP. Residues 209-231 (MATSQDHKRVGENDTGLNTGGMG) are disordered. The Mg(2+) site is built by Glu286 and Asn288.

It belongs to the GARS family. Mg(2+) serves as cofactor. The cofactor is Mn(2+).

It carries out the reaction 5-phospho-beta-D-ribosylamine + glycine + ATP = N(1)-(5-phospho-beta-D-ribosyl)glycinamide + ADP + phosphate + H(+). The protein operates within purine metabolism; IMP biosynthesis via de novo pathway; N(1)-(5-phospho-D-ribosyl)glycinamide from 5-phospho-alpha-D-ribose 1-diphosphate: step 2/2. This Pasteurella multocida (strain Pm70) protein is Phosphoribosylamine--glycine ligase.